The chain runs to 87 residues: MNKSNFFLLLAVCVSAFSVVMQQNQYRLNFTALDKAKKQEIALEQDYAQMRLQQARLANHEAIRAAAEKQNLHPPVSGNTFMVEHQR.

Topologically, residues 1–6 (MNKSNF) are cytoplasmic. Residues 7-23 (FLLLAVCVSAFSVVMQQ) form a helical membrane-spanning segment. Topologically, residues 24 to 87 (NQYRLNFTAL…GNTFMVEHQR (64 aa)) are periplasmic. Residues 31–71 (TALDKAKKQEIALEQDYAQMRLQQARLANHEAIRAAAEKQN) are a coiled coil. Residues 68 to 87 (EKQNLHPPVSGNTFMVEHQR) form a disordered region.

Belongs to the FtsL family. In terms of assembly, part of a complex composed of FtsB, FtsL and FtsQ.

The protein localises to the cell inner membrane. Its function is as follows. Essential cell division protein. May link together the upstream cell division proteins, which are predominantly cytoplasmic, with the downstream cell division proteins, which are predominantly periplasmic. The chain is Cell division protein FtsL from Neisseria gonorrhoeae (strain ATCC 700825 / FA 1090).